A 152-amino-acid chain; its full sequence is uncharacterized protein (152 aa).

Positions 1–24 (MRKMLAYTLYIVTYLTYIMNEVEC) are cleaved as a signal peptide.

This is an uncharacterized protein from Acheta domesticus (House cricket).